Here is a 340-residue protein sequence, read N- to C-terminus: DNA-directed RNA polymerase subunit alpha (340 aa).

The interval 1–233 is alpha N-terminal domain (alpha-NTD); it reads MIQDEIKVST…DLFIPLINSE (233 aa). Positions 265–340 are alpha C-terminal domain (alpha-CTD); that stretch reads TKDVAFKHIF…IQLPKNKNYL (76 aa).

The protein belongs to the RNA polymerase alpha chain family. As to quaternary structure, in plastids the minimal PEP RNA polymerase catalytic core is composed of four subunits: alpha, beta, beta', and beta''. When a (nuclear-encoded) sigma factor is associated with the core the holoenzyme is formed, which can initiate transcription.

The protein localises to the plastid. It is found in the chloroplast. The catalysed reaction is RNA(n) + a ribonucleoside 5'-triphosphate = RNA(n+1) + diphosphate. In terms of biological role, DNA-dependent RNA polymerase catalyzes the transcription of DNA into RNA using the four ribonucleoside triphosphates as substrates. The chain is DNA-directed RNA polymerase subunit alpha from Marchantia polymorpha (Common liverwort).